We begin with the raw amino-acid sequence, 212 residues long: Fucoxanthin-chlorophyll a-c binding protein E, chloroplastic (212 aa).

The transit peptide at 1–34 (MAIACAAAPGLRGAEPFNGAALATSAKSSSAMKM) directs the protein to the chloroplast. 3 helical membrane passes run 76 to 96 (IAML…PGML), 117 to 137 (IPPL…LFVV), and 178 to 198 (GRAA…SNQP).

The protein belongs to the fucoxanthin chlorophyll protein family. The LHC complex of chromophytic algae is composed of fucoxanthin, chlorophyll A and C bound non-covalently by fucoxanthin chlorophyll proteins (FCPs). The ratio of pigments in this LHC is; fucoxanthin: chlorophyll C: chlorophyll A; (0.6-1): (0.1-0.3): (1).

It is found in the plastid. The protein localises to the chloroplast thylakoid membrane. The light-harvesting complex (LHC) functions as a light receptor, it captures and delivers excitation energy to photosystems with which it is closely associated. Energy is transferred from the carotenoid and chlorophyll C (or B) to chlorophyll A and the photosynthetic reaction centers where it is used to synthesize ATP and reducing power. This chain is Fucoxanthin-chlorophyll a-c binding protein E, chloroplastic (FCPE), found in Macrocystis pyrifera (Giant kelp).